The chain runs to 414 residues: Serine hydroxymethyltransferase (414 aa).

(6S)-5,6,7,8-tetrahydrofolate is bound by residues Leu-121 and 125–127; that span reads GHL. The residue at position 229 (Lys-229) is an N6-(pyridoxal phosphate)lysine.

Belongs to the SHMT family. In terms of assembly, homodimer. The cofactor is pyridoxal 5'-phosphate.

It localises to the cytoplasm. The enzyme catalyses (6R)-5,10-methylene-5,6,7,8-tetrahydrofolate + glycine + H2O = (6S)-5,6,7,8-tetrahydrofolate + L-serine. Its pathway is one-carbon metabolism; tetrahydrofolate interconversion. The protein operates within amino-acid biosynthesis; glycine biosynthesis; glycine from L-serine: step 1/1. Its function is as follows. Catalyzes the reversible interconversion of serine and glycine with tetrahydrofolate (THF) serving as the one-carbon carrier. This reaction serves as the major source of one-carbon groups required for the biosynthesis of purines, thymidylate, methionine, and other important biomolecules. Also exhibits THF-independent aldolase activity toward beta-hydroxyamino acids, producing glycine and aldehydes, via a retro-aldol mechanism. The protein is Serine hydroxymethyltransferase of Thiobacillus denitrificans (strain ATCC 25259 / T1).